A 272-amino-acid chain; its full sequence is Potassium channel regulatory protein (272 aa).

One can recognise a BTB domain in the interval 5-106 (ELVTLNVGGK…LLNPYLLQPR (102 aa)).

Can form homooligomers. Interacts with KCNA1 (via cytoplasmic N-terminal domain) and KCNA4. In terms of tissue distribution, ubiquitous in normal tissues and expressed in some tumor tissues.

It is found in the endoplasmic reticulum. Inhibits potassium fluxes in cells. May regulate Kv1 family channel proteins by retaining a fraction of channels in endomembranes. In Homo sapiens (Human), this protein is Potassium channel regulatory protein (KCNRG).